The chain runs to 304 residues: MCTLGHKPDNSLVSNAFGFLRLPLDFMPYDGDADWVITGVPFDMATSGRAGGRHGPAAIRQVSTNLAWEGKRWPWNFDMRDRLKVVDCGDVVFSFGDAQEMSDNLQAHAERLLASGKRCLTFGGDHFITLPLLRAHAKHFGKMALVHFDAHTDTYAHGSKFDHGTMFFHAPNEGLIDPQHSVQIGIRTEYDHDNGFTVLDAAQVNDRSVEDVLAEVKRIVGDLPVYLTFDIDCLDPAHAPGTGTPVIGGLTSDRALKLVRGLQDLDIVGMDVVEVAPAYDQSEITALAAATLALEMLYIQAAKK.

Residues His-126, Asp-149, His-151, Asp-153, Asp-230, and Asp-232 each coordinate Mn(2+).

This sequence belongs to the arginase family. Agmatinase subfamily. Mn(2+) serves as cofactor.

It carries out the reaction agmatine + H2O = urea + putrescine. It participates in amine and polyamine biosynthesis; putrescine biosynthesis via agmatine pathway; putrescine from agmatine: step 1/1. Its function is as follows. Catalyzes the formation of putrescine from agmatine. This chain is Agmatinase, found in Edwardsiella ictaluri (strain 93-146).